A 444-amino-acid polypeptide reads, in one-letter code: Trigger factor (444 aa).

Residues 185–270 (GDKLIIDFEG…VNEIQIAKDF (86 aa)) form the PPIase FKBP-type domain.

It belongs to the FKBP-type PPIase family. Tig subfamily.

It localises to the cytoplasm. It carries out the reaction [protein]-peptidylproline (omega=180) = [protein]-peptidylproline (omega=0). Involved in protein export. Acts as a chaperone by maintaining the newly synthesized protein in an open conformation. Functions as a peptidyl-prolyl cis-trans isomerase. This Wolbachia pipientis wMel protein is Trigger factor.